A 122-amino-acid polypeptide reads, in one-letter code: Large ribosomal subunit protein eL31 (122 aa).

Belongs to the eukaryotic ribosomal protein eL31 family.

The polypeptide is Large ribosomal subunit protein eL31 (Caenorhabditis elegans).